We begin with the raw amino-acid sequence, 266 residues long: uncharacterized protein (266 aa).

The helical transmembrane segment at 13 to 33 threads the bilayer; sequence IIGLMLIIFAGILFYAYILQH.

Belongs to the LicD transferase family.

It is found in the membrane. This is an uncharacterized protein from Rickettsia prowazekii (strain Madrid E).